Here is a 786-residue protein sequence, read N- to C-terminus: Signal transducer and activator of transcription 5B (786 aa).

Y90 carries the phosphotyrosine modification. A Phosphoserine modification is found at S128. One can recognise an SH2 domain in the interval 589 to 686 (WNDGAILGFV…EVYSKYYTPV (98 aa)). Phosphotyrosine occurs at positions 682 and 699.

Belongs to the transcription factor STAT family. In terms of assembly, upon activation, forms a homodimer or a heterodimer with a related family member. Binds NR3C1. Interacts with NCOA1. Interacts with NMI. Interacts with SOCS7. Interacts (via SH2 domain) with INSR. Interacts with CPEB3; this inhibits STAT5B-mediated transcriptional activation. In terms of processing, tyrosine phosphorylated in response to signaling via activated KIT, resulting in translocation to the nucleus. Tyrosine phosphorylated in response to signaling via activated FLT3; wild-type FLT3 results in much weaker phosphorylation than constitutively activated mutant FLT3. Alternatively, can be phosphorylated by JAK2. Phosphorylation at Tyr-699 by PTK6 or HCK leads to an increase of its transcriptional activity.

The protein resides in the cytoplasm. The protein localises to the nucleus. Its function is as follows. Carries out a dual function: signal transduction and activation of transcription. Mediates cellular responses to the cytokine KITLG/SCF and other growth factors. Binds to the GAS element and activates PRL-induced transcription. Positively regulates hematopoietic/erythroid differentiation. The protein is Signal transducer and activator of transcription 5B (Stat5b) of Rattus norvegicus (Rat).